A 1367-amino-acid polypeptide reads, in one-letter code: Mediator of RNA polymerase II transcription subunit 23 (1367 aa).

The disordered stretch occupies residues 1343-1367; the sequence is PPQALSSGSPAPQANQVPTALPVTQ. Residues 1346 to 1367 are compositionally biased toward polar residues; it reads ALSSGSPAPQANQVPTALPVTQ.

This sequence belongs to the Mediator complex subunit 23 family. As to quaternary structure, component of the Mediator complex, which is composed of MED1, MED4, MED6, MED7, MED8, MED9, MED10, MED11, MED12, MED13, MED13L, MED14, MED15, MED16, MED17, MED18, MED19, MED20, MED21, MED22, MED23, MED24, MED25, MED26, MED27, MED29, MED30, MED31, CCNC, CDK8 and CDC2L6/CDK11. The MED12, MED13, CCNC and CDK8 subunits form a distinct module termed the CDK8 module. Mediator containing the CDK8 module is less active than Mediator lacking this module in supporting transcriptional activation. Individual preparations of the Mediator complex lacking one or more distinct subunits have been variously termed ARC, CRSP, DRIP, PC2, SMCC and TRAP. Interacts with CDK8, CEBPB, CTNNB1, ELK1 and GLI3. Interacts with the adenovirus E1A protein.

It localises to the nucleus. In terms of biological role, component of the Mediator complex, a coactivator involved in the regulated transcription of nearly all RNA polymerase II-dependent genes. Mediator functions as a bridge to convey information from gene-specific regulatory proteins to the basal RNA polymerase II transcription machinery. Mediator is recruited to promoters by direct interactions with regulatory proteins and serves as a scaffold for the assembly of a functional pre-initiation complex with RNA polymerase II and the general transcription factors. Also required for transcriptional activation subsequent to the assembly of the pre-initiation complex. Required for transcriptional activation by adenovirus E1A protein. Required for ELK1-dependent transcriptional activation in response to activated Ras signaling. The chain is Mediator of RNA polymerase II transcription subunit 23 (Med23) from Rattus norvegicus (Rat).